The following is a 230-amino-acid chain: Cytidylate kinase (230 aa).

14 to 22 contacts ATP; it reads GPSGVGKSS.

The protein belongs to the cytidylate kinase family. Type 1 subfamily.

The protein resides in the cytoplasm. The enzyme catalyses CMP + ATP = CDP + ADP. The catalysed reaction is dCMP + ATP = dCDP + ADP. This is Cytidylate kinase from Buchnera aphidicola subsp. Baizongia pistaciae (strain Bp).